We begin with the raw amino-acid sequence, 167 residues long: Translation initiation factor IF-3 (167 aa).

It belongs to the IF-3 family. As to quaternary structure, monomer.

The protein localises to the cytoplasm. Functionally, IF-3 binds to the 30S ribosomal subunit and shifts the equilibrium between 70S ribosomes and their 50S and 30S subunits in favor of the free subunits, thus enhancing the availability of 30S subunits on which protein synthesis initiation begins. The chain is Translation initiation factor IF-3 from Shouchella clausii (strain KSM-K16) (Alkalihalobacillus clausii).